The following is a 570-amino-acid chain: Urease subunit alpha (570 aa).

Residues 131 to 570 form the Urease domain; that stretch reads GGFDSHIHFI…LPMAQRYFMY (440 aa). Ni(2+)-binding residues include histidine 136, histidine 138, and lysine 219. Lysine 219 is modified (N6-carboxylysine). A substrate-binding site is contributed by histidine 221. Residues histidine 248 and histidine 274 each coordinate Ni(2+). The active-site Proton donor is the histidine 322. Ni(2+) is bound at residue aspartate 362.

It belongs to the metallo-dependent hydrolases superfamily. Urease alpha subunit family. As to quaternary structure, heterotrimer of UreA (gamma), UreB (beta) and UreC (alpha) subunits. Three heterotrimers associate to form the active enzyme. Ni cation is required as a cofactor. In terms of processing, carboxylation allows a single lysine to coordinate two nickel ions.

The protein resides in the cytoplasm. The enzyme catalyses urea + 2 H2O + H(+) = hydrogencarbonate + 2 NH4(+). The protein operates within nitrogen metabolism; urea degradation; CO(2) and NH(3) from urea (urease route): step 1/1. The chain is Urease subunit alpha from Rhodopseudomonas palustris (strain HaA2).